The primary structure comprises 193 residues: Protein CURVATURE THYLAKOID 1D, chloroplastic (193 aa).

The N-terminal 51 residues, 1 to 51 (MELCTRSTTIITHLPASFNGHGYLAGKSVDRISLPLQRNVASLVLQSRTLR), are a transit peptide targeting the chloroplast. Residues 52 to 117 (CSRKFPGETV…NDIKLDSDKT (66 aa)) are Stromal-facing. Residues 118-138 (YSILLYGSGAIVALYLTSAIV) form a helical membrane-spanning segment. At 139–142 (SSLE) the chain is on the lumenal side. Residues 143 to 163 (AIPLFPKLMEVVGLGYTLWFT) traverse the membrane as a helical segment. Residues 164–193 (TRYLLFKRNREELKTKVSEIKKQVLGSDSE) lie on the Stromal side of the membrane.

The protein belongs to the CURT family. In terms of assembly, homo- and heterodimers and trimers.

The protein localises to the plastid. It localises to the chloroplast thylakoid membrane. Its function is as follows. Determines thylakoid architecture by inducing membrane curvature. In Arabidopsis thaliana (Mouse-ear cress), this protein is Protein CURVATURE THYLAKOID 1D, chloroplastic (CURT1D).